Consider the following 404-residue polypeptide: Glucose-1-phosphate adenylyltransferase 2 (404 aa).

Residues Tyr97, Gly162, 177 to 178 (EK), and Ser195 contribute to the alpha-D-glucose 1-phosphate site.

It belongs to the bacterial/plant glucose-1-phosphate adenylyltransferase family. As to quaternary structure, homotetramer.

It carries out the reaction alpha-D-glucose 1-phosphate + ATP + H(+) = ADP-alpha-D-glucose + diphosphate. It functions in the pathway glycan biosynthesis; glycogen biosynthesis. In terms of biological role, involved in the biosynthesis of ADP-glucose, a building block required for the elongation reactions to produce glycogen. Catalyzes the reaction between ATP and alpha-D-glucose 1-phosphate (G1P) to produce pyrophosphate and ADP-Glc. This is Glucose-1-phosphate adenylyltransferase 2 from Vibrio vulnificus (strain CMCP6).